Consider the following 425-residue polypeptide: uncharacterized protein (425 aa).

The HD domain maps to 55–181 (RYAHSLGVYE…DLDTDRMDYL (127 aa)).

This is an uncharacterized protein from Mycoplasma genitalium (strain ATCC 33530 / DSM 19775 / NCTC 10195 / G37) (Mycoplasmoides genitalium).